The chain runs to 322 residues: Probable ATP-dependent 6-phosphofructokinase (322 aa).

ATP is bound by residues G11, 72–73 (RF), and 102–105 (GDGS). Residue D103 coordinates Mg(2+). Residues 125–127 (TID), 169–171 (MGR), E222, K249, and 255–258 (YLQR) contribute to the substrate site. Catalysis depends on D127, which acts as the Proton acceptor.

The protein belongs to the phosphofructokinase type A (PFKA) family. In terms of assembly, homotetramer. Requires Mg(2+) as cofactor.

The protein localises to the cytoplasm. It catalyses the reaction beta-D-fructose 6-phosphate + ATP = beta-D-fructose 1,6-bisphosphate + ADP + H(+). The protein operates within carbohydrate degradation; glycolysis; D-glyceraldehyde 3-phosphate and glycerone phosphate from D-glucose: step 3/4. Its function is as follows. Catalyzes the phosphorylation of D-fructose 6-phosphate to fructose 1,6-bisphosphate by ATP, the first committing step of glycolysis. The sequence is that of Probable ATP-dependent 6-phosphofructokinase (pfkA) from Malacoplasma penetrans (strain HF-2) (Mycoplasma penetrans).